Here is a 284-residue protein sequence, read N- to C-terminus: Hydrogenase expression/formation protein HupQ (284 aa).

The segment at 1-23 (MIGTQSILPPGFGPGSHGEEDRL) is disordered.

The protein belongs to the HupH/HyaF family.

The protein is Hydrogenase expression/formation protein HupQ (hupQ) of Azotobacter chroococcum mcd 1.